A 205-amino-acid polypeptide reads, in one-letter code: Low-density lipoprotein receptor class A domain-containing protein 1 (205 aa).

Residues 43–63 traverse the membrane as a helical segment; that stretch reads LLLLLATVAALIALVTILGLP. The 44-residue stretch at 71–114 folds into the LDL-receptor class A 1 domain; it reads ACITLTNRTGFLCHDQRSCIPASGVCDGVRTCTHGEDEDESLCR. Disulfide bonds link C72–C89, C83–C102, C96–C113, C141–C160, C163–C180, and C170–C193. The LDL-receptor class A 2; atypical domain maps to 115-161; the sequence is DVPQSLPHFLVAHCGDPASWIYSDQKCDGTNNCGDCSDELSPVTVCP. One can recognise an LDL-receptor class A 3; atypical domain in the interval 162–203; the sequence is PCGPGWWRCPSTFFKYCDCIPRHLCRDHVQHCSDWSDEYACP.

It belongs to the LDLR family.

It is found in the membrane. The polypeptide is Low-density lipoprotein receptor class A domain-containing protein 1 (LDLRAD1) (Homo sapiens (Human)).